We begin with the raw amino-acid sequence, 158 residues long: Putative cTAGE family member 3 (158 aa).

Positions glutamine 26–aspartate 96 form a coiled coil.

This sequence belongs to the cTAGE family. In terms of tissue distribution, expressed in normal tissues including colon, mammary gland, ovary, placenta, stomach and testis, as well as several fetal tissues.

In terms of biological role, tumor-associated antigen. The protein is Putative cTAGE family member 3 (CTAGE3P) of Homo sapiens (Human).